The primary structure comprises 374 residues: Phospho-2-dehydro-3-deoxyheptonate aldolase AMT16 (374 aa).

The protein belongs to the class-I DAHP synthase family.

It carries out the reaction D-erythrose 4-phosphate + phosphoenolpyruvate + H2O = 7-phospho-2-dehydro-3-deoxy-D-arabino-heptonate + phosphate. It participates in mycotoxin biosynthesis. In terms of biological role, nonribosomal peptide synthetase; part of the gene clusters that mediate the biosynthesis of AM-toxins, host-selective toxins (HSTs) causing Alternaria blotch on apple, a worldwide distributed disease. AM-toxins are cyclic depsipeptides containing the 3 residues 2-hydroxy-isovaleric acid (2-HIV), dehydroalanine, L-alanine which are common for all 3 AM-toxins I to III. The fourth precursor is L-alpha-amino-methoxyphenyl-valeric acid (L-Amv) for AM-toxin I, L-alpha-amino-phenyl-valeric acid (L-Apv) for AM-toxin II, and L-alpha-amino-hydroxyphenyl-valeric acid (L-Ahv) for AM-toxin III. AM-toxins have two target sites for affecting susceptible apple cells; they cause invagination of the plasma membrane and electrolyte loss and chloroplast disorganization. The non-ribosomal peptide synthetase AMT1 contains 4 catalytic modules and is responsible for activation of each residue in AM-toxin. The aldo-keto reductase AMT2 catalyzes the conversion of 2-keto-isovaleric acid (2-KIV) to 2-hydroxy-isovaleric acid (2-HIV), one of the precursor residues incorporated by AMT1 during AM-toxin biosynthesis, by reduction of its ketone to an alcohol. The cytochrome P450 monooxygenase AMT3 and the thioesterase AMT4 are also important for AM-toxin production, but their exact function within the AM-toxin biosynthesis are not known yet. Up to 21 proteins (including AMT1 to AMT4) are predicted to be involved in AM-toxin biosynthesis since their expression ishighly up-regulated in AM-toxin-producing cultures. The chain is Phospho-2-dehydro-3-deoxyheptonate aldolase AMT16 from Alternaria alternata (Alternaria rot fungus).